We begin with the raw amino-acid sequence, 316 residues long: Pyridoxal 5'-phosphate synthase subunit PdxS (316 aa).

Position 44 (Asp44) interacts with D-ribose 5-phosphate. The Schiff-base intermediate with D-ribose 5-phosphate role is filled by Lys101. Gly173 serves as a coordination point for D-ribose 5-phosphate. Lys185 is a binding site for D-glyceraldehyde 3-phosphate. Residues Gly234 and Gly255–Ser256 contribute to the D-ribose 5-phosphate site.

The protein belongs to the PdxS/SNZ family. In the presence of PdxT, forms a dodecamer of heterodimers.

It carries out the reaction aldehydo-D-ribose 5-phosphate + D-glyceraldehyde 3-phosphate + L-glutamine = pyridoxal 5'-phosphate + L-glutamate + phosphate + 3 H2O + H(+). It participates in cofactor biosynthesis; pyridoxal 5'-phosphate biosynthesis. Its function is as follows. Catalyzes the formation of pyridoxal 5'-phosphate from ribose 5-phosphate (RBP), glyceraldehyde 3-phosphate (G3P) and ammonia. The ammonia is provided by the PdxT subunit. Can also use ribulose 5-phosphate and dihydroxyacetone phosphate as substrates, resulting from enzyme-catalyzed isomerization of RBP and G3P, respectively. This chain is Pyridoxal 5'-phosphate synthase subunit PdxS, found in Sulfurisphaera tokodaii (strain DSM 16993 / JCM 10545 / NBRC 100140 / 7) (Sulfolobus tokodaii).